Reading from the N-terminus, the 254-residue chain is Adenosine 5'-phosphosulfate reductase (254 aa).

[4Fe-4S] cluster contacts are provided by Cys-140, Cys-141, Cys-223, and Cys-226. The active-site Nucleophile; cysteine thiosulfonate intermediate is Cys-249.

This sequence belongs to the PAPS reductase family. CysH subfamily. Requires [4Fe-4S] cluster as cofactor.

It localises to the cytoplasm. It catalyses the reaction [thioredoxin]-disulfide + sulfite + AMP + 2 H(+) = adenosine 5'-phosphosulfate + [thioredoxin]-dithiol. It participates in sulfur metabolism; hydrogen sulfide biosynthesis; sulfite from sulfate. Functionally, catalyzes the formation of sulfite from adenosine 5'-phosphosulfate (APS) using thioredoxin as an electron donor. This Mycobacterium bovis (strain ATCC BAA-935 / AF2122/97) protein is Adenosine 5'-phosphosulfate reductase.